The sequence spans 432 residues: Probable D-serine dehydratase (432 aa).

Residue Lys112 is modified to N6-(pyridoxal phosphate)lysine.

Belongs to the serine/threonine dehydratase family. DsdA subfamily. The cofactor is pyridoxal 5'-phosphate.

It carries out the reaction D-serine = pyruvate + NH4(+). This chain is Probable D-serine dehydratase, found in Pediococcus pentosaceus (strain ATCC 25745 / CCUG 21536 / LMG 10740 / 183-1w).